The sequence spans 149 residues: D-aminoacyl-tRNA deacylase (149 aa).

A Gly-cisPro motif, important for rejection of L-amino acids motif is present at residues 137–138 (GP).

Belongs to the DTD family. Homodimer.

Its subcellular location is the cytoplasm. The enzyme catalyses glycyl-tRNA(Ala) + H2O = tRNA(Ala) + glycine + H(+). It carries out the reaction a D-aminoacyl-tRNA + H2O = a tRNA + a D-alpha-amino acid + H(+). In terms of biological role, an aminoacyl-tRNA editing enzyme that deacylates mischarged D-aminoacyl-tRNAs. Also deacylates mischarged glycyl-tRNA(Ala), protecting cells against glycine mischarging by AlaRS. Acts via tRNA-based rather than protein-based catalysis; rejects L-amino acids rather than detecting D-amino acids in the active site. By recycling D-aminoacyl-tRNA to D-amino acids and free tRNA molecules, this enzyme counteracts the toxicity associated with the formation of D-aminoacyl-tRNA entities in vivo and helps enforce protein L-homochirality. This Paracoccus denitrificans (strain Pd 1222) protein is D-aminoacyl-tRNA deacylase.